The primary structure comprises 132 residues: ATP synthase epsilon chain (132 aa).

This sequence belongs to the ATPase epsilon chain family. In terms of assembly, F-type ATPases have 2 components, CF(1) - the catalytic core - and CF(0) - the membrane proton channel. CF(1) has five subunits: alpha(3), beta(3), gamma(1), delta(1), epsilon(1). CF(0) has three main subunits: a, b and c.

The protein localises to the cell inner membrane. Produces ATP from ADP in the presence of a proton gradient across the membrane. In Anaeromyxobacter dehalogenans (strain 2CP-C), this protein is ATP synthase epsilon chain.